The following is a 366-amino-acid chain: Histone-lysine N-methyltransferase SETD7 (366 aa).

MORN repeat units follow at residues 36–58 (FEGN…DGST), 59–81 (LEGY…DGGV), and 106–128 (FKGQ…DGGS). An SET domain is found at 214–336 (ERVYVAESLI…ADEELTVAYG (123 aa)). S-adenosyl-L-methionine is bound by residues 226–228 (AGE), Asn296, His297, and Glu356.

The protein belongs to the class V-like SAM-binding methyltransferase superfamily. Histone-lysine methyltransferase family. SET7 subfamily. In terms of assembly, interacts with IPF1/PDX-1. In terms of tissue distribution, widely expressed. Expressed in pancreatic islets.

It localises to the nucleus. The protein localises to the chromosome. It catalyses the reaction L-lysyl(4)-[histone H3] + S-adenosyl-L-methionine = N(6)-methyl-L-lysyl(4)-[histone H3] + S-adenosyl-L-homocysteine + H(+). The enzyme catalyses L-lysyl-[protein] + S-adenosyl-L-methionine = N(6)-methyl-L-lysyl-[protein] + S-adenosyl-L-homocysteine + H(+). In terms of biological role, histone methyltransferase that specifically monomethylates 'Lys-4' of histone H3. H3 'Lys-4' methylation represents a specific tag for epigenetic transcriptional activation. Plays a central role in the transcriptional activation of genes such as collagenase or insulin. Recruited by IPF1/PDX-1 to the insulin promoter, leading to activate transcription. Also has methyltransferase activity toward non-histone proteins such as CGAS, p53/TP53, TAF10, and possibly TAF7 by recognizing and binding the [KR]-[STA]-K in substrate proteins. Monomethylates 'Lys-189' of TAF10, leading to increase the affinity of TAF10 for RNA polymerase II. Monomethylates 'Lys-372' of p53/TP53, stabilizing p53/TP53 and increasing p53/TP53-mediated transcriptional activation. Monomethylates 'Lys-491' of CGAS, promoting interaction between SGF29 and CGAS. This Homo sapiens (Human) protein is Histone-lysine N-methyltransferase SETD7 (SETD7).